Consider the following 428-residue polypeptide: Light-independent protochlorophyllide reductase subunit N (428 aa).

3 residues coordinate [4Fe-4S] cluster: Cys31, Cys56, and Cys117.

It belongs to the BchN/ChlN family. As to quaternary structure, protochlorophyllide reductase is composed of three subunits; BchL, BchN and BchB. Forms a heterotetramer of two BchB and two BchN subunits. [4Fe-4S] cluster is required as a cofactor.

The enzyme catalyses chlorophyllide a + oxidized 2[4Fe-4S]-[ferredoxin] + 2 ADP + 2 phosphate = protochlorophyllide a + reduced 2[4Fe-4S]-[ferredoxin] + 2 ATP + 2 H2O. It participates in porphyrin-containing compound metabolism; bacteriochlorophyll biosynthesis (light-independent). Its function is as follows. Component of the dark-operative protochlorophyllide reductase (DPOR) that uses Mg-ATP and reduced ferredoxin to reduce ring D of protochlorophyllide (Pchlide) to form chlorophyllide a (Chlide). This reaction is light-independent. The NB-protein (BchN-BchB) is the catalytic component of the complex. This Rhodopseudomonas palustris (strain BisB18) protein is Light-independent protochlorophyllide reductase subunit N.